The sequence spans 80 residues: Exodeoxyribonuclease 7 small subunit (80 aa).

The protein belongs to the XseB family. Heterooligomer composed of large and small subunits.

The protein localises to the cytoplasm. The enzyme catalyses Exonucleolytic cleavage in either 5'- to 3'- or 3'- to 5'-direction to yield nucleoside 5'-phosphates.. Its function is as follows. Bidirectionally degrades single-stranded DNA into large acid-insoluble oligonucleotides, which are then degraded further into small acid-soluble oligonucleotides. This chain is Exodeoxyribonuclease 7 small subunit, found in Citrobacter koseri (strain ATCC BAA-895 / CDC 4225-83 / SGSC4696).